An 809-amino-acid chain; its full sequence is Quinate/shikimate dehydrogenase (quinone) (809 aa).

5 helical membrane passes run 14-34 (VWCFILGLALLITGAFYVIGG), 41-61 (GGSWYFLIAGLMITTSAFFMF), 68-88 (VWLYALAFIGTVIWALIDAGF), 90-110 (FWPLHSRLMFPAGLFAAVMLT), and 127-147 (AYVIGGLTVLGMLGGLYGMFI).

Belongs to the bacterial PQQ dehydrogenase family. Pyrroloquinoline quinone serves as cofactor.

The protein resides in the cell membrane. The enzyme catalyses L-quinate + a quinone = 3-dehydroquinate + a quinol. The catalysed reaction is shikimate + a quinone = 3-dehydroshikimate + a quinol. The protein operates within aromatic compound metabolism; 3,4-dihydroxybenzoate biosynthesis; 3-dehydroquinate from D-quinate (PQQ route): step 1/1. Its function is as follows. Can act either on quinate or on shikimate. This chain is Quinate/shikimate dehydrogenase (quinone) (quiA), found in Acinetobacter baylyi (strain ATCC 33305 / BD413 / ADP1).